The primary structure comprises 392 residues: Chalcone synthase-like protein 1 (392 aa).

Cysteine 166 is an active-site residue.

This sequence belongs to the thiolase-like superfamily. Chalcone/stilbene synthases family. As to expression, expressed at the same level in leaves and in glandular trichomes.

It is found in the cytoplasm. In terms of biological role, chalcone synthase that may use malonyl-CoA and hexanoyl-CoA as substrates but without producing olivetol or olivetolic acid. This Cannabis sativa (Hemp) protein is Chalcone synthase-like protein 1 (CAN383).